We begin with the raw amino-acid sequence, 100 residues long: MKMSRLCLSIALLVLLGTLAASTPGCDTSNQAKAQRPDFCLEPPYTGPCKAKMIRYFYNAKAGFCETFVYGGCKAKSNNFRSAEDCMRTCGGAIGPRENL.

An N-terminal signal peptide occupies residues 1-21 (MKMSRLCLSIALLVLLGTLAA). A propeptide spanning residues 22–33 (STPGCDTSNQAK) is cleaved from the precursor. The BPTI/Kunitz inhibitor domain maps to 40 to 90 (CLEPPYTGPCKAKMIRYFYNAKAGFCETFVYGGCKAKSNNFRSAEDCMRTC). Disulfide bonds link C40–C90, C49–C73, and C65–C86. A propeptide is located at residue L100.

The protein resides in the secreted. The sequence is that of Spleen trypsin inhibitor I from Bos taurus (Bovine).